Consider the following 365-residue polypeptide: MAQTLTILGLESSCDDTAAAVVRQTEGQAAEILSSVVHGQADLHSAYGGVVPEIAARAHAEKLDICVRQALTEAGVSLTDLDAVAVTAGPGLIGGVMSGVMCAKGIAAATGLPLIGVNHLAGHALTPRLTDQIAYPYLMLLVSGGHCQYLIAHGPEQFSRLGGTIDDAPGEAFDKTARLLGLPQPGGPSVEGEARQGDPKRFRFPRPLLDRPDCDLSFSGLKTALMRMRDQLVGEKGGLTRQDRADLCAGFQAAVVDTLAEKTRRALTLYLDEAPAEPVVAVAGGVAANAAIRAALETVCAEAGARFTAPPLRLCTDNAAMIAYAGLERFRSGARDGLDLTARPRWPLDQSSPAMLGSGKKGAKA.

2 residues coordinate Fe cation: His119 and His123. Substrate is bound by residues 141–145, Asp174, and Gly187; that span reads LVSGG. The segment at 184-203 is disordered; it reads QPGGPSVEGEARQGDPKRFR. Residues 192–201 are compositionally biased toward basic and acidic residues; sequence GEARQGDPKR. Asn289 provides a ligand contact to substrate. Residue Asp317 participates in Fe cation binding. The segment at 342–365 is disordered; that stretch reads ARPRWPLDQSSPAMLGSGKKGAKA.

This sequence belongs to the KAE1 / TsaD family. The cofactor is Fe(2+).

Its subcellular location is the cytoplasm. It carries out the reaction L-threonylcarbamoyladenylate + adenosine(37) in tRNA = N(6)-L-threonylcarbamoyladenosine(37) in tRNA + AMP + H(+). Required for the formation of a threonylcarbamoyl group on adenosine at position 37 (t(6)A37) in tRNAs that read codons beginning with adenine. Is involved in the transfer of the threonylcarbamoyl moiety of threonylcarbamoyl-AMP (TC-AMP) to the N6 group of A37, together with TsaE and TsaB. TsaD likely plays a direct catalytic role in this reaction. The chain is tRNA N6-adenosine threonylcarbamoyltransferase from Ruegeria pomeroyi (strain ATCC 700808 / DSM 15171 / DSS-3) (Silicibacter pomeroyi).